The primary structure comprises 88 residues: Early E1B 9 kDa protein (88 aa).

The tract at residues 23-88 (NMEGSQDEDN…DLFPELRRLP (66 aa)) is disordered. The segment covering 34–44 (RLLASAASGSS) has biased composition (low complexity).

The protein is Early E1B 9 kDa protein of Homo sapiens (Human).